The chain runs to 289 residues: ATP synthase subunit a (289 aa).

A run of 6 helical transmembrane segments spans residues 43–63, 101–121, 160–180, 193–213, 232–252, and 259–279; these read AFHV…VLIF, SAVI…MNAV, LSVF…GGFI, IFVQ…TLIA, VFIL…GLGI, and AVFH…LTIV.

Belongs to the ATPase A chain family. As to quaternary structure, F-type ATPases have 2 components, CF(1) - the catalytic core - and CF(0) - the membrane proton channel. CF(1) has five subunits: alpha(3), beta(3), gamma(1), delta(1), epsilon(1). CF(0) has three main subunits: a(1), b(2) and c(9-12). The alpha and beta chains form an alternating ring which encloses part of the gamma chain. CF(1) is attached to CF(0) by a central stalk formed by the gamma and epsilon chains, while a peripheral stalk is formed by the delta and b chains.

The protein resides in the cell inner membrane. Key component of the proton channel; it plays a direct role in the translocation of protons across the membrane. The chain is ATP synthase subunit a from Pseudomonas syringae pv. tomato (strain ATCC BAA-871 / DC3000).